A 118-amino-acid chain; its full sequence is Large ribosomal subunit protein uL18 (118 aa).

This sequence belongs to the universal ribosomal protein uL18 family. Part of the 50S ribosomal subunit; part of the 5S rRNA/L5/L18/L25 subcomplex. Contacts the 5S and 23S rRNAs.

This is one of the proteins that bind and probably mediate the attachment of the 5S RNA into the large ribosomal subunit, where it forms part of the central protuberance. This chain is Large ribosomal subunit protein uL18, found in Dechloromonas aromatica (strain RCB).